A 171-amino-acid polypeptide reads, in one-letter code: Tetratricopeptide repeat protein 9C (171 aa).

TPR repeat units lie at residues 8 to 41, 72 to 107, and 108 to 141; these read AQLY…LRGL, TDCY…QPEN, and AKAL…QPKD.

Belongs to the TTC9 family.

This Rattus norvegicus (Rat) protein is Tetratricopeptide repeat protein 9C (Ttc9c).